A 166-amino-acid chain; its full sequence is Small ribosomal subunit protein uS5 (166 aa).

An S5 DRBM domain is found at 12 to 75; it reads YIEKLVQVNR…EAARRNMIQV (64 aa).

It belongs to the universal ribosomal protein uS5 family. As to quaternary structure, part of the 30S ribosomal subunit. Contacts proteins S4 and S8.

Its function is as follows. With S4 and S12 plays an important role in translational accuracy. In terms of biological role, located at the back of the 30S subunit body where it stabilizes the conformation of the head with respect to the body. In Ectopseudomonas mendocina (strain ymp) (Pseudomonas mendocina), this protein is Small ribosomal subunit protein uS5.